A 368-amino-acid chain; its full sequence is Phosphoserine aminotransferase (368 aa).

Residue arginine 44 coordinates L-glutamate. Pyridoxal 5'-phosphate is bound by residues 78-79, tryptophan 104, threonine 157, aspartate 179, and glutamine 202; that span reads AT. Lysine 203 carries the N6-(pyridoxal phosphate)lysine modification. 244-245 is a pyridoxal 5'-phosphate binding site; it reads NT.

It belongs to the class-V pyridoxal-phosphate-dependent aminotransferase family. SerC subfamily. In terms of assembly, homodimer. Pyridoxal 5'-phosphate serves as cofactor.

It localises to the cytoplasm. It carries out the reaction O-phospho-L-serine + 2-oxoglutarate = 3-phosphooxypyruvate + L-glutamate. It catalyses the reaction 4-(phosphooxy)-L-threonine + 2-oxoglutarate = (R)-3-hydroxy-2-oxo-4-phosphooxybutanoate + L-glutamate. The protein operates within amino-acid biosynthesis; L-serine biosynthesis; L-serine from 3-phospho-D-glycerate: step 2/3. Its pathway is cofactor biosynthesis; pyridoxine 5'-phosphate biosynthesis; pyridoxine 5'-phosphate from D-erythrose 4-phosphate: step 3/5. Functionally, catalyzes the reversible conversion of 3-phosphohydroxypyruvate to phosphoserine and of 3-hydroxy-2-oxo-4-phosphonooxybutanoate to phosphohydroxythreonine. This chain is Phosphoserine aminotransferase, found in Neisseria meningitidis serogroup B (strain ATCC BAA-335 / MC58).